Reading from the N-terminus, the 118-residue chain is Elongin-B (118 aa).

Residue methionine 1 is modified to N-acetylmethionine. The Ubiquitin-like domain maps to 1-79 (MDVFLMIRRH…QAPATVGLAF (79 aa)). Position 84 is a phosphothreonine (threonine 84). Residues 91–118 (EPFSSPPELPDVMKPQDSGGSANEQAVQ) are disordered. Phosphoserine occurs at positions 108 and 111. Over residues 108–118 (SGGSANEQAVQ) the composition is skewed to polar residues.

The protein belongs to the Elongin B family. Heterotrimer of an A (ELOA, ELOA2 or ELOA3P), ELOB and ELOC subunit. The elongin BC complex interacts with EPOP; leading to recruit the elongin BC complex to Polycomb group (PcG) target genes, thereby restricting excessive activity of the PRC2/EED-EZH2 complex. Component of multiple cullin-RING E3 ubiquitin-protein ligase complexes composed of Elongin BC (ELOB and ELOC), a cullin (either CUL2 or CUL5), a catalytic subunit (either RBX1 or RNF7/RBX2), as well as a substrate adapter protein that can be either ASB2, ASB9, ASB11, KLHDC2, KLHDC3, KLHDC10, APPBP2, FEM1A, FEM1B, FEM1C, LRR1, PCMTD1, SOCS1, SOCS2, SOCS5, SPSB1, SPSB3, ELOA, VHL, WSB1 or RAB40C. As part of the Elongin BC E3 ubiquitin ligase complex; interacts with NRBP1. May also interact with DCUN1D1, DCUN1D2, DCUN1D3 and DCUN1D5. May form oligomers as a KLHDC2/KLHDC3-ELOB-ELOC complex; this interaction is autoinhibitory for the E3 ligase complex as the substrate-binding site of KLHDC2/KLHDC3 is blocked in the oligomer.

The protein localises to the nucleus. It functions in the pathway protein modification; protein ubiquitination. Its function is as follows. SIII, also known as elongin, is a general transcription elongation factor that increases the RNA polymerase II transcription elongation past template-encoded arresting sites. Subunit A is transcriptionally active and its transcription activity is strongly enhanced by binding to the dimeric complex of the SIII regulatory subunits B and C (elongin BC complex). In embryonic stem cells, the elongin BC complex is recruited by EPOP to Polycomb group (PcG) target genes in order generate genomic region that display both active and repressive chromatin properties, an important feature of pluripotent stem cells. Functionally, core component of multiple cullin-2 and cullin-5-RING E3 ubiquitin-protein ligase complexes (ECS complexes), which mediate the ubiquitination of target proteins. By binding to BC-box motifs it seems to link target recruitment subunits, like VHL and members of the SOCS box family, to Cullin/RBX1 modules that activate E2 ubiquitination enzymes. Component the von Hippel-Lindau ubiquitination complex CBC(VHL). A number of ECS complexes (containing either KLHDC2, KLHDC3, KLHDC10, APPBP2, FEM1A, FEM1B or FEM1C as substrate-recognition component) are part of the DesCEND (destruction via C-end degrons) pathway, which recognizes a C-degron located at the extreme C terminus of target proteins, leading to their ubiquitination and degradation. The ECS(ASB9) complex mediates ubiquitination and degradation of CKB. As part of a multisubunit ubiquitin ligase complex, polyubiquitinates monoubiquitinated POLR2A. ECS(LRR1) ubiquitinates MCM7 and promotes CMG replisome disassembly by VCP and chromatin extraction during S-phase. As part of the ECS(RAB40C) complex, mediates ANKRD28 ubiquitination and degradation, thereby inhibiting protein phosphatase 6 (PP6) complex activity and focal adhesion assembly during cell migration. The chain is Elongin-B from Mus musculus (Mouse).